Here is a 1122-residue protein sequence, read N- to C-terminus: Midnolin homolog (1122 aa).

The Ubiquitin-like domain occupies 69-143; the sequence is INLNISTTTG…IILIPNVETG (75 aa). The interval 210–300 is required for interaction with Pc; the sequence is GGASGSSINA…SGQRSSGRIG (91 aa). 8 disordered regions span residues 257 to 399, 596 to 630, 645 to 677, 746 to 775, 840 to 876, 886 to 905, 922 to 955, and 1067 to 1122; these read VGGS…STLN, KHRH…HFFN, FATS…GAGA, GVVS…KSGS, APTT…RSKM, KCNS…ASGS, AATK…NGCT, and AAPA…DTAA. A compositionally biased stretch (low complexity) spans 266–298; sequence SGTSSSSSSTSSSSSSSSSSSRTRSSGQRSSGR. 2 stretches are compositionally biased toward basic residues: residues 300–310 and 321–352; these read GHGHVHSHQHP and SHGH…HHHN. Over residues 375 to 397 the composition is skewed to low complexity; sequence PSSSGASGSAPATGTGQSQSSST. Positions 596-610 are enriched in basic residues; it reads KHRHYHGQGHGHGHG. Low complexity-rich tracts occupy residues 612-627, 648-663, 746-766, 856-867, 889-903, and 922-936; these read GHSS…SSSH, SSSS…SSSP, GVVS…AASG, SGSSSTTSSGSG, SRAQ…TLAS, and AATK…SSHS. Polar residues-rich tracts occupy residues 937 to 954 and 1071 to 1085; these read CCQT…SNGC and NSIT…VNGN. The segment covering 1086–1107 has biased composition (low complexity); that stretch reads TSTAPATAATSAAAAPTAAPPS.

Interacts with PRC1 complex member polycomb protein Pc; the interaction targets Pc for ubiquitin-independent proteasomal degradation. Does not interact with PRC1 members Ph, Psc or Sce so does not appear to be a member of the PRC1 complex. Interacts with 26S proteasome regulatory subunit Rpn10.

Its subcellular location is the nucleus. In terms of biological role, facilitates ubiquitin-independent proteasomal degradation of polycomb protein Pc by interacting directly with the proteasome and recruiting Pc to it. This chain is Midnolin homolog, found in Drosophila melanogaster (Fruit fly).